The primary structure comprises 290 residues: MAALRALLPRACSSLLSSVRCPELRRFASGANFQYIITEKKGKNSSVGLIQLNRPKALNALCNGLIEELNQALETFEQDPAVGAIVLTGGDKAFAAGADIKEMQNRTFQDCYSSKFLSHWDHITRVKKPVIAAVNGYALGGGCELAMMCDIIYAGEKAQFGQPEILLGTIPGAGGTQRLTRAVGKSLAMEMVLTGDRISAQDAKQAGLVSKIFPVEKLVEEAIQCAEKIASNSKIVVAMAKESVNAAFEMTLTEGNKLEKRLFYSTFATDDRREGMTAFVEKRKANFKDH.

A mitochondrion-targeting transit peptide spans 1-27 (MAALRALLPRACSSLLSSVRCPELRRF). 98–101 (ADIK) provides a ligand contact to substrate. Residue lysine 101 is modified to N6-acetyllysine; alternate. An N6-succinyllysine; alternate modification is found at lysine 101. Position 114 is a phosphoserine (serine 114). The residue at position 115 (lysine 115) is an N6-acetyllysine; alternate. Lysine 115 is modified (N6-succinyllysine; alternate). Glycine 141 lines the substrate pocket. N6-succinyllysine is present on lysine 204. Position 211 is an N6-acetyllysine (lysine 211). Position 217 is an N6-acetyllysine; alternate (lysine 217). Lysine 217 carries the post-translational modification N6-succinyllysine; alternate.

This sequence belongs to the enoyl-CoA hydratase/isomerase family. In terms of assembly, homohexamer; dimer of trimers. Post-translationally, acetylation of Lys-101 is observed in liver mitochondria from fasted mice but not from fed mice.

It localises to the mitochondrion matrix. The catalysed reaction is a (3S)-3-hydroxyacyl-CoA = a (2E)-enoyl-CoA + H2O. It carries out the reaction a (3E)-enoyl-CoA = a 4-saturated (2E)-enoyl-CoA. It catalyses the reaction (3E)-hexenoyl-CoA = (2E)-hexenoyl-CoA. The enzyme catalyses (3S)-3-hydroxybutanoyl-CoA = (2E)-butenoyl-CoA + H2O. The catalysed reaction is 3-hydroxyisovaleryl-CoA = 3-methylbut-2-enoyl-CoA + H2O. It carries out the reaction 3-hydroxypropanoyl-CoA = acryloyl-CoA + H2O. It catalyses the reaction 3-hydroxybutanoyl-CoA = (2E)-butenoyl-CoA + H2O. The enzyme catalyses 2-methylpropenoyl-CoA + H2O = (S)-3-hydroxyisobutanoyl-CoA. The catalysed reaction is (3S)-hydroxyhexanoyl-CoA = (2E)-hexenoyl-CoA + H2O. It carries out the reaction (3S)-hydroxydecanoyl-CoA = (2E)-decenoyl-CoA + H2O. The protein operates within lipid metabolism; fatty acid beta-oxidation. Its function is as follows. Converts unsaturated trans-2-enoyl-CoA species ((2E)-enoyl-CoA) to the corresponding (3S)-3-hydroxyacyl-CoA species through addition of a water molecule to the double bond. Catalyzes the hydration of medium- and short-chained fatty enoyl-CoA thioesters from 4 carbons long (C4) up to C16. Has high substrate specificity for crotonyl-CoA ((2E)-butenoyl-CoA) and moderate specificity for acryloyl-CoA, 3-methylcrotonyl-CoA (3-methyl-(2E)-butenoyl-CoA) and methacrylyl-CoA ((2E)-2-methylpropenoyl-CoA). Can bind tiglyl-CoA (2-methylcrotonoyl-CoA), but hydrates only a small amount of this substrate. Plays a key role in the beta-oxidation spiral of short- and medium-chain fatty acid oxidation. At a lower rate than the hydratase reaction, catalyzes the isomerase reaction of trans-3-enoyl-CoA species (such as (3E)-hexenoyl-CoA) to trans-2-enoyl-CoA species (such as (2E)-hexenoyl-CoA), which are subsequently hydrated to 3(S)-3-hydroxyacyl-CoA species (such as (3S)-hydroxyhexanoyl-CoA). The sequence is that of Enoyl-CoA hydratase, mitochondrial from Mus musculus (Mouse).